The sequence spans 196 residues: Small ribosomal subunit protein uS4c (196 aa).

Residues threonine 22–glutamate 42 are disordered. An S4 RNA-binding domain is found at methionine 89–leucine 169.

This sequence belongs to the universal ribosomal protein uS4 family. As to quaternary structure, part of the 30S ribosomal subunit. Contacts protein S5. The interaction surface between S4 and S5 is involved in control of translational fidelity.

The protein localises to the plastid. The protein resides in the chloroplast. In terms of biological role, one of the primary rRNA binding proteins, it binds directly to 16S rRNA where it nucleates assembly of the body of the 30S subunit. Functionally, with S5 and S12 plays an important role in translational accuracy. The chain is Small ribosomal subunit protein uS4c (rps4) from Melica altissima (Siberian melic grass).